The chain runs to 204 residues: Peptide deformylase (204 aa).

Fe cation-binding residues include Cys131 and His174. The active site involves Glu175. Residue His178 coordinates Fe cation.

This sequence belongs to the polypeptide deformylase family. Requires Fe(2+) as cofactor.

The catalysed reaction is N-terminal N-formyl-L-methionyl-[peptide] + H2O = N-terminal L-methionyl-[peptide] + formate. Removes the formyl group from the N-terminal Met of newly synthesized proteins. Requires at least a dipeptide for an efficient rate of reaction. N-terminal L-methionine is a prerequisite for activity but the enzyme has broad specificity at other positions. The chain is Peptide deformylase from Streptococcus pyogenes serotype M1.